The following is a 67-amino-acid chain: Small ribosomal subunit protein eS27 (67 aa).

Zn(2+) is bound by residues Cys22, Cys25, Cys41, and Cys44. The C4-type zinc finger occupies 22–44 (CPDCGNEQVTFSHAAMVVRCLVC).

Belongs to the eukaryotic ribosomal protein eS27 family. Part of the 30S ribosomal subunit. The cofactor is Zn(2+).

The polypeptide is Small ribosomal subunit protein eS27 (Pyrobaculum neutrophilum (strain DSM 2338 / JCM 9278 / NBRC 100436 / V24Sta) (Thermoproteus neutrophilus)).